We begin with the raw amino-acid sequence, 128 residues long: Transcription antitermination protein NusB (128 aa).

It belongs to the NusB family.

In terms of biological role, involved in transcription antitermination. Required for transcription of ribosomal RNA (rRNA) genes. Binds specifically to the boxA antiterminator sequence of the ribosomal RNA (rrn) operons. The chain is Transcription antitermination protein NusB from Staphylococcus carnosus (strain TM300).